Reading from the N-terminus, the 427-residue chain is Sensor histidine kinase ArsS (427 aa).

Transmembrane regions (helical) follow at residues 3–23 and 131–151; these read FSIF…FGAF and NYFL…LFVL. The HAMP domain maps to 151–203; it reads LQSLLPLRELRSQVKPFAQGDKSVSCKSKQKDEIGDLANEFDNCILKINAMNE. Residues 211–398 enclose the Histidine kinase domain; sequence SIMHELRTPI…LSYHYSNGRI (188 aa). His-214 carries the post-translational modification Phosphohistidine; by autocatalysis.

Autophosphorylated.

The protein localises to the membrane. It carries out the reaction ATP + protein L-histidine = ADP + protein N-phospho-L-histidine.. Functionally, member of the two-component regulatory system ArsS/ArsR that regulates genes involved in biofilm formation and acid adaptation by acting on major ammonia-producing pathways. Functions as a sensor protein kinase which is autophosphorylated at a histidine residue and transfers its phosphate group to the conserved aspartic acid residue in the regulatory domain of ArsR. In turn, ArsR binds to the upstream promoter regions of target genes including ureA, amiE and amiF to positively regulate their expression in response to acidic pH. Also participates in acidic acclimatation in a phosphorylation-independent pathway by regulating acid-induced trafficking of urease and its accessory proteins to the inner membrane. This Helicobacter pylori (strain ATCC 700392 / 26695) (Campylobacter pylori) protein is Sensor histidine kinase ArsS.